The following is a 262-amino-acid chain: Flap endonuclease Xni (262 aa).

A Mg(2+)-binding site is contributed by Asp105. Residues 162–259 (ERSQFLDLMA…VIDSQPEKTI (98 aa)) enclose the 5'-3' exonuclease domain. The K(+) site is built by Leu172, Ala173, Pro181, Ile183, and Ile186. Positions 185-190 (GIGPKS) are interaction with DNA.

This sequence belongs to the Xni family. Mg(2+) serves as cofactor. The cofactor is K(+).

Functionally, has flap endonuclease activity. During DNA replication, flap endonucleases cleave the 5'-overhanging flap structure that is generated by displacement synthesis when DNA polymerase encounters the 5'-end of a downstream Okazaki fragment. The sequence is that of Flap endonuclease Xni from Shewanella baltica (strain OS185).